The chain runs to 138 residues: Basic phospholipase A2 homolog Vur-S49 (138 aa).

An N-terminal signal peptide occupies residues 1 to 16; the sequence is MRALWIVAVCLIGVEG. Cystine bridges form between Cys-42–Cys-131, Cys-44–Cys-60, Cys-59–Cys-111, Cys-65–Cys-138, Cys-66–Cys-104, Cys-73–Cys-97, and Cys-91–Cys-102. The segment at 121-133 is important for membrane-damaging activities in eukaryotes and bacteria; heparin-binding; it reads KKYKVYLRFKCKG.

It belongs to the phospholipase A2 family. Group II subfamily. S49 sub-subfamily. Expressed by the venom gland.

The protein localises to the secreted. In terms of biological role, snake venom phospholipase A2 homolog that lacks enzymatic activity. Is able to suppress the acetylcholine (ACh)-evoked current mediated by alpha-7 (CHRNA7)-similar nAChRs in L.stagnalis neurons (IC(50)=2.18 uM). This activity is only partially reversible and seems to be non-competitive. The polypeptide is Basic phospholipase A2 homolog Vur-S49 (Vipera renardi (Steppe viper)).